The following is a 152-amino-acid chain: Deoxyuridine 5'-triphosphate nucleotidohydrolase (152 aa).

Substrate is bound by residues 71–73 (RSG), Asn84, 88–90 (LID), and Met98.

The protein belongs to the dUTPase family. As to quaternary structure, homotrimer. Mg(2+) serves as cofactor.

The catalysed reaction is dUTP + H2O = dUMP + diphosphate + H(+). It functions in the pathway pyrimidine metabolism; dUMP biosynthesis; dUMP from dCTP (dUTP route): step 2/2. Its function is as follows. This enzyme is involved in nucleotide metabolism: it produces dUMP, the immediate precursor of thymidine nucleotides and it decreases the intracellular concentration of dUTP so that uracil cannot be incorporated into DNA. The chain is Deoxyuridine 5'-triphosphate nucleotidohydrolase from Escherichia coli O157:H7.